The chain runs to 239 residues: Tumor protein p53-inducible nuclear protein 1 (239 aa).

The LIR motif lies at 25-37; it reads EKEDDEWILVDFI.

In terms of assembly, interacts with p53/TP53 and HIPK2. Interacts with PRKCG, GABARAP, GABARAPL1, GABARAPL2, MAP1LC3A, MAP1LC3B and MAP1LC3C. Specifically expressed by acinar cells of chronic pancreatitis tissue.

It localises to the cytoplasm. Its subcellular location is the cytosol. The protein localises to the nucleus. The protein resides in the PML body. It is found in the cytoplasmic vesicle. It localises to the autophagosome. In terms of biological role, antiproliferative and proapoptotic protein involved in cell stress response which acts as a dual regulator of transcription and autophagy. Acts as a positive regulator of autophagy. In response to cellular stress or activation of autophagy, relocates to autophagosomes where it interacts with autophagosome-associated proteins GABARAP, GABARAPL1/L2, MAP1LC3A/B/C and regulates autophagy. Acts as an antioxidant and plays a major role in p53/TP53-driven oxidative stress response. Possesses both a p53/TP53-independent intracellular reactive oxygen species (ROS) regulatory function and a p53/TP53-dependent transcription regulatory function. Positively regulates p53/TP53 and p73/TP73 and stimulates their capacity to induce apoptosis and regulate cell cycle. In response to double-strand DNA breaks, promotes p53/TP53 phosphorylation on 'Ser-46' and subsequent apoptosis. Acts as a tumor suppressor by inducing cell death by an autophagy and caspase-dependent mechanism. Can reduce cell migration by regulating the expression of SPARC. In Rattus norvegicus (Rat), this protein is Tumor protein p53-inducible nuclear protein 1 (Trp53inp1).